The primary structure comprises 236 residues: Uridylate kinase (236 aa).

10–13 lines the ATP pocket; sequence KLSG. G52 contributes to the UMP binding site. Positions 53 and 57 each coordinate ATP. UMP contacts are provided by residues D72 and 133 to 140; that span reads TGNPFFTT. ATP is bound by residues T160, Y166, and D169.

It belongs to the UMP kinase family. Homohexamer.

The protein localises to the cytoplasm. It carries out the reaction UMP + ATP = UDP + ADP. Its pathway is pyrimidine metabolism; CTP biosynthesis via de novo pathway; UDP from UMP (UMPK route): step 1/1. Its activity is regulated as follows. Inhibited by UTP. Catalyzes the reversible phosphorylation of UMP to UDP. The polypeptide is Uridylate kinase (Ralstonia nicotianae (strain ATCC BAA-1114 / GMI1000) (Ralstonia solanacearum)).